A 146-amino-acid polypeptide reads, in one-letter code: Protein E6 (146 aa).

Zinc fingers lie at residues 27–63 (CVFCKNELTTEELLAFALKELSIVWRHNWPFGVCAPC) and 100–136 (CHACSKPLSIQEKEHQVQAYIHFHYIAGQWTGRCCQC).

This sequence belongs to the papillomaviridae E6 protein family. Forms homodimers. Interacts with ubiquitin-protein ligase UBE3A/E6-AP; this interaction stimulates UBE3A ubiquitin activity. Interacts with host TP53 and EP300; this interaction inhibits TP53 activity.

Its subcellular location is the host cytoplasm. It localises to the host nucleus. In terms of biological role, plays a major role in the induction and maintenance of cellular transformation. E6 associates with host UBE3A/E6-AP ubiquitin-protein ligase and modulates its activity. Sequesters tumor suppressor TP53 in the host cytoplasm and modulates its activity by interacting with host EP300 that results in the reduction of TP53 acetylation and activation. In turn, apoptosis induced by DNA damage is inhibited. E6 also protects host keratinocytes from apoptosis by mediating the degradation of host BAK1. May also inhibit host immune response. The polypeptide is Protein E6 (Human papillomavirus type 61).